Reading from the N-terminus, the 281-residue chain is Bis(5'-nucleosyl)-tetraphosphatase, symmetrical (281 aa).

Belongs to the Ap4A hydrolase family.

The enzyme catalyses P(1),P(4)-bis(5'-adenosyl) tetraphosphate + H2O = 2 ADP + 2 H(+). Its function is as follows. Hydrolyzes diadenosine 5',5'''-P1,P4-tetraphosphate to yield ADP. The chain is Bis(5'-nucleosyl)-tetraphosphatase, symmetrical from Pectobacterium carotovorum subsp. carotovorum (strain PC1).